We begin with the raw amino-acid sequence, 356 residues long: Chaperone protein DnaJ (356 aa).

In terms of domain architecture, J spans 5-69 (DYYQILGVSK…ERRKEYDRIL (65 aa)). Residues 121–197 (GCEKDIEYER…CSGRGRVAMH (77 aa)) form a CR-type zinc finger. Residues Cys134, Cys137, Cys151, Cys154, Cys171, Cys174, Cys185, and Cys188 each coordinate Zn(2+). CXXCXGXG motif repeat units lie at residues 134–141 (CPTCEGKG), 151–158 (CHACEGTG), 171–178 (CSVCKGRG), and 185–192 (CPACSGRG).

This sequence belongs to the DnaJ family. Homodimer. Zn(2+) is required as a cofactor.

Its subcellular location is the cytoplasm. Its function is as follows. Participates actively in the response to hyperosmotic and heat shock by preventing the aggregation of stress-denatured proteins and by disaggregating proteins, also in an autonomous, DnaK-independent fashion. Unfolded proteins bind initially to DnaJ; upon interaction with the DnaJ-bound protein, DnaK hydrolyzes its bound ATP, resulting in the formation of a stable complex. GrpE releases ADP from DnaK; ATP binding to DnaK triggers the release of the substrate protein, thus completing the reaction cycle. Several rounds of ATP-dependent interactions between DnaJ, DnaK and GrpE are required for fully efficient folding. Also involved, together with DnaK and GrpE, in the DNA replication of plasmids through activation of initiation proteins. The protein is Chaperone protein DnaJ of Hydrogenobacter thermophilus (strain DSM 6534 / IAM 12695 / TK-6).